The sequence spans 131 residues: Sulfurtransferase TusD (131 aa).

The Cysteine persulfide intermediate role is filled by C81.

Belongs to the DsrE/TusD family. Heterohexamer, formed by a dimer of trimers. The hexameric TusBCD complex contains 2 copies each of TusB, TusC and TusD. The TusBCD complex interacts with TusE.

The protein resides in the cytoplasm. In terms of biological role, part of a sulfur-relay system required for 2-thiolation of 5-methylaminomethyl-2-thiouridine (mnm(5)s(2)U) at tRNA wobble positions. Accepts sulfur from TusA and transfers it in turn to TusE. In Yersinia pseudotuberculosis serotype O:1b (strain IP 31758), this protein is Sulfurtransferase TusD.